The chain runs to 390 residues: NADH-quinone oxidoreductase subunit D (390 aa).

The protein belongs to the complex I 49 kDa subunit family. NDH-1 is composed of 14 different subunits. Subunits NuoB, C, D, E, F, and G constitute the peripheral sector of the complex.

The protein localises to the cell membrane. The enzyme catalyses a quinone + NADH + 5 H(+)(in) = a quinol + NAD(+) + 4 H(+)(out). NDH-1 shuttles electrons from NADH, via FMN and iron-sulfur (Fe-S) centers, to quinones in the respiratory chain. The immediate electron acceptor for the enzyme in this species is believed to be ubiquinone. Couples the redox reaction to proton translocation (for every two electrons transferred, four hydrogen ions are translocated across the cytoplasmic membrane), and thus conserves the redox energy in a proton gradient. The protein is NADH-quinone oxidoreductase subunit D of Wolbachia pipientis wMel.